The sequence spans 773 residues: Tyrosine kinase receptor Cad96Ca (773 aa).

A signal peptide spans 1-48 (MVYHHHNHESRIIHCRKQLTSWRRRSLLLTIIVVTATVVSLISQEAEA). Residues 49 to 315 (HNQNAPPILY…ITIFSLKSGT (267 aa)) lie on the Extracellular side of the membrane. The 115-residue stretch at 58–172 (YVRERNWRIS…ENSSGYRPQT (115 aa)) folds into the Cadherin domain. N-linked (GlcNAc...) asparagine glycans are attached at residues Asn-126, Asn-164, and Asn-180. Positions 196–302 (SIRNGLPNSR…TPSGGHHNNS (107 aa)) are disordered. The span at 209 to 235 (WYPPVPQNNIFGPPPFGNNYPPPPPNI) shows a compositional bias: pro residues. Positions 243–253 (SGEEEQPDEEV) are enriched in acidic residues. 2 stretches are compositionally biased toward polar residues: residues 254 to 283 (TPTT…STRV) and 290 to 302 (ETTT…HNNS). Asn-278, Asn-279, Asn-300, and Asn-301 each carry an N-linked (GlcNAc...) asparagine glycan. Residues 316-336 (IPIVVTVGGFFVAIAVLLAYL) traverse the membrane as a helical segment. The Cytoplasmic portion of the chain corresponds to 337-773 (CRRRLCAISR…NIVSLSGEKL (437 aa)). Disordered stretches follow at residues 352-373 (KEKE…LTDD) and 411-447 (TGVT…AGSS). Residues 361-373 (SNQSQLSSTLTDD) show a composition bias toward polar residues. Residues 411-433 (TGVTNGGVSSPGVPSPGTGEPGS) are compositionally biased toward low complexity. The region spanning 470–749 (LKFFNILGEG…MLDKLLHTEM (280 aa)) is the Protein kinase domain. Residues 476–484 (LGEGAFGQV) and Lys-504 each bind ATP. The active-site Proton acceptor is Asp-610.

Belongs to the protein kinase superfamily. Tyr protein kinase family. Fibroblast growth factor receptor subfamily.

It is found in the membrane. It carries out the reaction L-tyrosyl-[protein] + ATP = O-phospho-L-tyrosyl-[protein] + ADP + H(+). The protein is Tyrosine kinase receptor Cad96Ca (Cad96Ca) of Drosophila melanogaster (Fruit fly).